Here is a 407-residue protein sequence, read N- to C-terminus: MEAVVNKFLKYISFDTKSNEDSNAHPSTEGQMVLAKELARELKEMGMIDVSVDSKAYVMATLPANTENHVPTIGFIAHMDTAPDMSGKDVKPQFVENYDGKDIILNKEKNIVLKVKDFPEIKDYIGKTLITTDGTTLLGADDKAGVAEIMTAMEHLINHPEIKHGTVKIAFTPDEEIGAGADYFDVEKFNADFAYTVDGGTVGELEYENFNAAGVKLTIHGRNVHPGSAKDKMINSITVGNELHSMLPENEVPEHTEGYEGFYHIVAFNGTVEETKMQYIIRDFDRKKFEERKATMQKVVDTLNSKYGEGTVELQMNDQYYNMKEKVEPVHHIVDTAFKAIEEVGLVPKVVPIRGGTDGARLSFMGLPTPNLFTGGHNFHGKFEFIPTFAMSKAVDVILKIIELYSK.

Position 78 (H78) interacts with Zn(2+). D80 is an active-site residue. D141 lines the Zn(2+) pocket. Catalysis depends on E175, which acts as the Proton acceptor. Residues E176, D198, and H380 each contribute to the Zn(2+) site.

Belongs to the peptidase M20B family. Requires Zn(2+) as cofactor.

Its subcellular location is the cytoplasm. The enzyme catalyses Release of the N-terminal residue from a tripeptide.. In terms of biological role, cleaves the N-terminal amino acid of tripeptides. The sequence is that of Peptidase T from Clostridium novyi (strain NT).